The sequence spans 426 residues: Serine--tRNA ligase (426 aa).

Residue 233-235 (TSE) coordinates L-serine. 264–266 (RAE) contributes to the ATP binding site. Residue E287 coordinates L-serine. 351–354 (EISS) contributes to the ATP binding site. S387 contacts L-serine.

This sequence belongs to the class-II aminoacyl-tRNA synthetase family. Type-1 seryl-tRNA synthetase subfamily. Homodimer. The tRNA molecule binds across the dimer.

The protein localises to the cytoplasm. The catalysed reaction is tRNA(Ser) + L-serine + ATP = L-seryl-tRNA(Ser) + AMP + diphosphate + H(+). The enzyme catalyses tRNA(Sec) + L-serine + ATP = L-seryl-tRNA(Sec) + AMP + diphosphate + H(+). It functions in the pathway aminoacyl-tRNA biosynthesis; selenocysteinyl-tRNA(Sec) biosynthesis; L-seryl-tRNA(Sec) from L-serine and tRNA(Sec): step 1/1. In terms of biological role, catalyzes the attachment of serine to tRNA(Ser). Is also able to aminoacylate tRNA(Sec) with serine, to form the misacylated tRNA L-seryl-tRNA(Sec), which will be further converted into selenocysteinyl-tRNA(Sec). This is Serine--tRNA ligase from Stenotrophomonas maltophilia (strain K279a).